The primary structure comprises 243 residues: Small ribosomal subunit protein uS3 (243 aa).

One can recognise a KH type-2 domain in the interval 38–106 (IRKYLNARLA…DIQINIFEVK (69 aa)). Positions 217-243 (TQTKESGRGGNGNNNGGKNFKRKKNNR) are disordered.

Belongs to the universal ribosomal protein uS3 family. In terms of assembly, part of the 30S ribosomal subunit. Forms a tight complex with proteins S10 and S14.

Functionally, binds the lower part of the 30S subunit head. Binds mRNA in the 70S ribosome, positioning it for translation. The protein is Small ribosomal subunit protein uS3 of Phocaeicola vulgatus (strain ATCC 8482 / DSM 1447 / JCM 5826 / CCUG 4940 / NBRC 14291 / NCTC 11154) (Bacteroides vulgatus).